The primary structure comprises 426 residues: uncharacterized protein (426 aa).

This is an uncharacterized protein from Acidianus filamentous virus 1 (isolate United States/Yellowstone) (AFV-1).